The following is a 99-amino-acid chain: Malonate decarboxylase acyl carrier protein (99 aa).

Serine 25 carries the O-(phosphoribosyl dephospho-coenzyme A)serine modification.

Belongs to the MdcC family. Covalently binds the prosthetic group of malonate decarboxylase.

The protein localises to the cytoplasm. Functionally, subunit of malonate decarboxylase, it is an acyl carrier protein to which acetyl and malonyl thioester residues are bound via a 2'-(5''-phosphoribosyl)-3'-dephospho-CoA prosthetic group and turn over during the catalytic mechanism. This chain is Malonate decarboxylase acyl carrier protein, found in Pseudomonas putida (Arthrobacter siderocapsulatus).